Reading from the N-terminus, the 86-residue chain is Small ribosomal subunit protein bS20 (86 aa).

The segment covering 1-16 (MANIKSQEKRIRTNER) has biased composition (basic and acidic residues). The disordered stretch occupies residues 1–25 (MANIKSQEKRIRTNERRRLRNQSVK).

The protein belongs to the bacterial ribosomal protein bS20 family.

In terms of biological role, binds directly to 16S ribosomal RNA. In Mycobacterium sp. (strain JLS), this protein is Small ribosomal subunit protein bS20.